The following is a 1294-amino-acid chain: CLIP-associating protein 2 (1294 aa).

The disordered stretch occupies residues 1–61; the sequence is MAMGDDKSFD…KVGGASKEGG (61 aa). 2 positions are modified to phosphoserine: Ser-8 and Ser-14. Over residues 47 to 61 the composition is skewed to gly residues; the sequence is SAGGPKVGGASKEGG. Positions 60-311 are TOG 1; that stretch reads GGAGAVDEDD…KSLQTYLKSS (252 aa). HEAT repeat units lie at residues 173–208, 209–245, and 250–287; these read HGAE…IRHT, HVPR…EWQT, and RHAA…HFPG. The segment at 314–368 is disordered; sequence VASLPQSDRSSSSSQESLNRPFSSKWSTANPSTVAGRVSAGSSKASSLPGSLQRS. Ser-316, Ser-327, and Ser-330 each carry phosphoserine. A compositionally biased stretch (low complexity) spans 316–334; it reads SLPQSDRSSSSSQESLNRP. 2 stretches are compositionally biased toward polar residues: residues 335-346 and 353-367; these read FSSKWSTANPST and AGSS…SLQR. Phosphoserine is present on residues Ser-360, Ser-368, Ser-370, and Ser-407. Residues 409 to 467 form a disordered region; the sequence is EDTSDKLDGTASEDGRVRAKLSAPLAGMGNAKADSRGRSRTKMVSQSQPGSRSGSPGRV. Residues 411–425 show a composition bias toward basic and acidic residues; the sequence is TSDKLDGTASEDGRV. Residues 444 to 580 form an interaction with microtubules, MAPRE1 and MAPRE3 region; the sequence is RGRSRTKMVS…GPGYGISQSS (137 aa). Low complexity predominate over residues 453–467; sequence SQSQPGSRSGSPGRV. Phosphoserine is present on residues Ser-455, Ser-459, Ser-463, Ser-478, and Ser-489. The interval 488-557 is disordered; sequence ASAQKRSKIP…PLASRHHSRS (70 aa). Positions 494 to 497 match the SXIP motif 1; mediates interaction with MAPRE1 and targeting to microtubule plus ends motif; sequence SKIP. Ser-507 is modified (phosphoserine). The short motif at 517–520 is the SXIP motif 2; mediates interaction with MAPRE1 and targeting to microtubule plus ends element; it reads SRIP. Residues Ser-525, Ser-529, Ser-585, Ser-587, Ser-596, Ser-621, and Ser-627 each carry the phosphoserine modification. Residues 617–645 are disordered; that stretch reads YGMHSDDDANSDASSACSERSYSSRNGSI. Positions 627-641 are enriched in low complexity; sequence SDASSACSERSYSSR. Residues 649-881 form a TOG 2 region; the sequence is MRQTEDVAEV…TKLLHNHLRN (233 aa). HEAT repeat units follow at residues 710–747 and 772–809; these read RVFS…KMGA and LQFN…QMDP. Position 787 is a phosphothreonine (Thr-787). Residues 872–1294 form an interaction with RSN and localization to the Golgi and kinetochores region; it reads TKLLHNHLRN…DPTTDVSGQS (423 aa). Disordered stretches follow at residues 878–928 and 952–995; these read HLRN…FDYD and SFRS…DSSQ. Composition is skewed to polar residues over residues 880–892 and 901–922; these read RNTG…SMGS and SPAN…TLSP. Ser-892 bears the Phosphoserine mark. Residues Ser-952, Ser-955, Ser-1013, and Ser-1029 each carry the phosphoserine modification. The segment covering 955–972 has biased composition (basic and acidic residues); the sequence is SQEDMNEPLKRDSKKDDG. A required for cortical localization region spans residues 1017–1294; sequence RDYNPYNYSD…DPTTDVSGQS (278 aa). HEAT repeat units lie at residues 1054 to 1091, 1098 to 1135, and 1216 to 1253; these read LDHS…TQEE, EHFK…HQPA, and LLLP…VIGD.

It belongs to the CLASP family. In terms of assembly, interacts with microtubules. Interacts with MAPRE1; probably required for targeting to the growing microtubule plus ends. Interacts with CLIP2, ERC1, MAPRE3, PHLDB2 and RSN. The interaction with ERC1 may be mediated by PHLDB2. Interacts with GCC2; recruits CLASP2 to Golgi membranes. Interacts with MACF1. Interacts with mtcl2 and MTCL1. Phosphorylated by GSK3B. Phosphorylation reduces MAPRE1 binding. Phosphorylation by GSK3B may negatively regulate binding to microtubule lattices in lamella. In terms of tissue distribution, brain-specific.

Its subcellular location is the cytoplasm. It localises to the cytoskeleton. The protein localises to the microtubule organizing center. The protein resides in the centrosome. It is found in the chromosome. Its subcellular location is the centromere. It localises to the kinetochore. The protein localises to the spindle. The protein resides in the golgi apparatus. It is found in the trans-Golgi network. Its subcellular location is the cell membrane. It localises to the cell projection. The protein localises to the ruffle membrane. The protein resides in the cell cortex. Microtubule plus-end tracking protein that promotes the stabilization of dynamic microtubules. Involved in the nucleation of noncentrosomal microtubules originating from the trans-Golgi network (TGN). Required for the polarization of the cytoplasmic microtubule arrays in migrating cells towards the leading edge of the cell. May act at the cell cortex to enhance the frequency of rescue of depolymerizing microtubules by attaching their plus-ends to cortical platforms composed of ERC1 and PHLDB2. This cortical microtubule stabilizing activity is regulated at least in part by phosphatidylinositol 3-kinase signaling. Also performs a similar stabilizing function at the kinetochore which is essential for the bipolar alignment of chromosomes on the mitotic spindle. Acts as a mediator of ERBB2-dependent stabilization of microtubules at the cell cortex. The sequence is that of CLIP-associating protein 2 (CLASP2) from Homo sapiens (Human).